Consider the following 201-residue polypeptide: Adenylyl-sulfate kinase (201 aa).

Residue 35-42 (GLSGSGKS) participates in ATP binding. Catalysis depends on Ser-109, which acts as the Phosphoserine intermediate.

The protein belongs to the APS kinase family.

It catalyses the reaction adenosine 5'-phosphosulfate + ATP = 3'-phosphoadenylyl sulfate + ADP + H(+). It participates in sulfur metabolism; hydrogen sulfide biosynthesis; sulfite from sulfate: step 2/3. Functionally, catalyzes the synthesis of activated sulfate. The chain is Adenylyl-sulfate kinase from Salmonella paratyphi A (strain AKU_12601).